A 37-amino-acid chain; its full sequence is Small ribosomal subunit protein eS32 (37 aa).

It belongs to the eukaryotic ribosomal protein eS32 family. Part of the small ribosomal subunit.

In terms of biological role, interacts with N(4)-acetylcytidine (ac(4)C) 1459 of the small rRNA; the acetyl group of ac(4)C1459 briges the interaction with this protein. The protein is Small ribosomal subunit protein eS32 (rpl41e) of Thermococcus kodakarensis (strain ATCC BAA-918 / JCM 12380 / KOD1) (Pyrococcus kodakaraensis (strain KOD1)).